Consider the following 146-residue polypeptide: 3-dehydroquinate dehydratase (146 aa).

The Proton acceptor role is filled by tyrosine 22. Substrate is bound by residues asparagine 74, histidine 80, and aspartate 87. Residue histidine 100 is the Proton donor of the active site. Substrate contacts are provided by residues 101-102 (LS) and arginine 111.

This sequence belongs to the type-II 3-dehydroquinase family. Homododecamer.

The enzyme catalyses 3-dehydroquinate = 3-dehydroshikimate + H2O. The protein operates within metabolic intermediate biosynthesis; chorismate biosynthesis; chorismate from D-erythrose 4-phosphate and phosphoenolpyruvate: step 3/7. Functionally, catalyzes a trans-dehydration via an enolate intermediate. This Clostridium perfringens (strain SM101 / Type A) protein is 3-dehydroquinate dehydratase.